The primary structure comprises 543 residues: Hydroxylamine reductase (543 aa).

4 residues coordinate [4Fe-4S] cluster: C5, C8, C17, and C23. Residues H236, E260, C304, C398, C426, C451, E486, and K488 each coordinate hybrid [4Fe-2O-2S] cluster. Cysteine persulfide is present on C398.

This sequence belongs to the HCP family. The cofactor is [4Fe-4S] cluster. Requires hybrid [4Fe-2O-2S] cluster as cofactor.

It is found in the cytoplasm. The catalysed reaction is A + NH4(+) + H2O = hydroxylamine + AH2 + H(+). Catalyzes the reduction of hydroxylamine to form NH(3) and H(2)O. This chain is Hydroxylamine reductase, found in Bacteroides thetaiotaomicron (strain ATCC 29148 / DSM 2079 / JCM 5827 / CCUG 10774 / NCTC 10582 / VPI-5482 / E50).